Consider the following 140-residue polypeptide: MIDISKIREALPHRYPILLVDRVLEVSDDEIVAIKNVTINEPFFNGHFPQYPVMPGVLIMEALAQTAGVLELSKKENTGKLVFYAGMDKVKFKKQVVPGDQLVMTAKFVKRRGTIAVVEAKAEVDGKLAASGTLTFAIGN.

The active site involves histidine 47.

It belongs to the thioester dehydratase family. FabZ subfamily.

The protein localises to the cytoplasm. It catalyses the reaction a (3R)-hydroxyacyl-[ACP] = a (2E)-enoyl-[ACP] + H2O. In terms of biological role, involved in unsaturated fatty acids biosynthesis. Catalyzes the dehydration of short chain beta-hydroxyacyl-ACPs and long chain saturated and unsaturated beta-hydroxyacyl-ACPs. This Streptococcus mutans serotype c (strain ATCC 700610 / UA159) protein is 3-hydroxyacyl-[acyl-carrier-protein] dehydratase FabZ.